The sequence spans 388 residues: P2X purinoceptor 4 (388 aa).

The Cytoplasmic portion of the chain corresponds to 1–33 (MAGCCAALAAFLFEYDTPRIVLIRSRKVGLMNR). A helical membrane pass occupies residues 34–54 (AVQLLILAYVIGWVFVWEKGY). The Extracellular portion of the chain corresponds to 55–338 (QETDSVVSSV…KFDIIPTMIN (284 aa)). Residues Lys-67 and Lys-69 each coordinate ATP. Residues Lys-67 and Lys-69 each contribute to the CTP site. Asn-75 and Asn-110 each carry an N-linked (GlcNAc...) asparagine glycan. Intrachain disulfides connect Cys-116–Cys-165, Cys-126–Cys-149, and Cys-132–Cys-159. N-linked (GlcNAc...) asparagine glycosylation is found at Asn-153 and Asn-184. The ATP site is built by Thr-186 and Leu-188. Thr-186 contacts CTP. Asn-199 and Asn-208 each carry an N-linked (GlcNAc...) asparagine glycan. Intrachain disulfides connect Cys-217/Cys-227 and Cys-261/Cys-270. The ATP site is built by Asn-293, Arg-295, and Lys-313. CTP contacts are provided by Asn-293, Arg-295, and Lys-313. Residues 339 to 359 (IGSGLALLGMATVLCDIIVLY) traverse the membrane as a helical segment. Over 360-388 (CMKKRLYYREKKYKYVEDYEQGLASELDQ) the chain is Cytoplasmic.

It belongs to the P2X receptor family. As to quaternary structure, functional P2RXs are organized as homomeric and heteromeric trimers. Forms heterotrimer with P2RX1. Interacts with P2RX7 (via C-terminus); this interaction is functional only in the presence of ATP. Forms heterotrimer with P2RX4; functional differences between homomeric P2RX4 and P2RX4/6 heterotrimer are minor. Interacts with AP1M2.

The protein localises to the cell membrane. It localises to the lysosome membrane. It carries out the reaction K(+)(in) = K(+)(out). The catalysed reaction is Na(+)(in) = Na(+)(out). The enzyme catalyses Ca(2+)(in) = Ca(2+)(out). Activated by ATP. pH-dependent and inhibited by acidic pH. ATP-gated nonselective transmembrane cation channel permeable to potassium, sodium and calcium. CTP, but not GTP or UTP, functions as a weak affinity agonist for P2RX4. Activated by extracellularly released ATP, it plays multiple role in immunity and central nervous system physiology. Plays a key role in initial steps of T-cell activation and Ca(2+) microdomain formation. Also participates in basal T-cell activity without TCR/CD3 stimulation. Promotes the differentiation and activation of Th17 cells via expression of retinoic acid-related orphan receptor C/RORC. Upon activation, drives microglia motility via the PI3K/Akt pathway. Could also function as an ATP-gated cation channel of lysosomal membranes. The chain is P2X purinoceptor 4 (P2RX4) from Homo sapiens (Human).